Here is a 401-residue protein sequence, read N- to C-terminus: CCA-adding enzyme (401 aa).

ATP-binding residues include G32 and R35. The CTP site is built by G32 and R35. 2 residues coordinate Mg(2+): D45 and D47. R116, D159, R162, R165, and R168 together coordinate ATP. CTP contacts are provided by R116, D159, R162, R165, and R168.

The protein belongs to the tRNA nucleotidyltransferase/poly(A) polymerase family. Bacterial CCA-adding enzyme type 3 subfamily. In terms of assembly, homodimer. Requires Mg(2+) as cofactor.

It catalyses the reaction a tRNA precursor + 2 CTP + ATP = a tRNA with a 3' CCA end + 3 diphosphate. The catalysed reaction is a tRNA with a 3' CCA end + 2 CTP + ATP = a tRNA with a 3' CCACCA end + 3 diphosphate. In terms of biological role, catalyzes the addition and repair of the essential 3'-terminal CCA sequence in tRNAs without using a nucleic acid template. Adds these three nucleotides in the order of C, C, and A to the tRNA nucleotide-73, using CTP and ATP as substrates and producing inorganic pyrophosphate. tRNA 3'-terminal CCA addition is required both for tRNA processing and repair. Also involved in tRNA surveillance by mediating tandem CCA addition to generate a CCACCA at the 3' terminus of unstable tRNAs. While stable tRNAs receive only 3'-terminal CCA, unstable tRNAs are marked with CCACCA and rapidly degraded. The protein is CCA-adding enzyme of Leuconostoc mesenteroides subsp. mesenteroides (strain ATCC 8293 / DSM 20343 / BCRC 11652 / CCM 1803 / JCM 6124 / NCDO 523 / NBRC 100496 / NCIMB 8023 / NCTC 12954 / NRRL B-1118 / 37Y).